The chain runs to 287 residues: ATP synthase gamma chain (287 aa).

Belongs to the ATPase gamma chain family. In terms of assembly, F-type ATPases have 2 components, CF(1) - the catalytic core - and CF(0) - the membrane proton channel. CF(1) has five subunits: alpha(3), beta(3), gamma(1), delta(1), epsilon(1). CF(0) has three main subunits: a, b and c.

The protein resides in the cell inner membrane. Produces ATP from ADP in the presence of a proton gradient across the membrane. The gamma chain is believed to be important in regulating ATPase activity and the flow of protons through the CF(0) complex. This Geobacter metallireducens (strain ATCC 53774 / DSM 7210 / GS-15) protein is ATP synthase gamma chain.